A 416-amino-acid chain; its full sequence is Gap junction alpha-3 protein (416 aa).

The stretch at 2–15 is an intramembrane region; sequence GDWSFLGRLLENAQ. The Cytoplasmic portion of the chain corresponds to 16-19; the sequence is EHST. A helical membrane pass occupies residues 20–40; the sequence is VIGKVWLTVLFIFRILVLGAA. Residues 41 to 71 are Extracellular-facing; sequence AEEVWGDEQSDFTCNTQQPGCENVCYDRAFP. Disulfide bonds link Cys54–Cys198, Cys61–Cys192, and Cys65–Cys187. The chain crosses the membrane as a helical span at residues 72-92; that stretch reads ISHIRFWALQIIFVSTPTLIY. Residues 93-158 are Cytoplasmic-facing; that stretch reads LGHVLHIVRM…GALLRTYVFN (66 aa). Over residues 110 to 128 the composition is skewed to basic and acidic residues; sequence EEELLRRDNPQHGRGREPM. The interval 110–141 is disordered; sequence EEELLRRDNPQHGRGREPMRTGSPRDPPLRDD. Residues 159-179 form a helical membrane-spanning segment; that stretch reads IIFKTLFEVGFIAGQYFLYGF. Residues 180 to 207 lie on the Extracellular side of the membrane; sequence QLQPLYRCDRWPCPNTVDCFISRPTEKT. Residues 208–228 form a helical membrane-spanning segment; it reads IFVIFMLAVACASLVLNMLEI. Over 229–416 the chain is Cytoplasmic; sequence YHLGWKKLKQ…GRARPGDLAI (188 aa). Residues 336 to 416 are disordered; sequence GAEPQTPASK…GRARPGDLAI (81 aa). A compositionally biased stretch (low complexity) spans 342-353; sequence PASKPSSAASSP.

This sequence belongs to the connexin family. Alpha-type (group II) subfamily. In terms of assembly, a hemichannel or connexon is composed of a hexamer of connexins. A functional gap junction is formed by the apposition of two hemichannels. Forms heteromeric channels with GJA8. Detected in eye lens (at protein level). Most abundant in lens, but also present in heart and kidney.

The protein localises to the cell membrane. Its subcellular location is the cell junction. The protein resides in the gap junction. Functionally, structural component of lens fiber gap junctions. Gap junctions are dodecameric channels that connect the cytoplasm of adjoining cells. They are formed by the docking of two hexameric hemichannels, one from each cell membrane. Small molecules and ions diffuse from one cell to a neighboring cell via the central pore. This chain is Gap junction alpha-3 protein (Gja3), found in Rattus norvegicus (Rat).